Consider the following 148-residue polypeptide: MGRGRVEMKRIENKINRQVTFSKRRAGLLKKAHEISILCDAEVSLIVFSHKGKLFEYSSESCMEKVLERYERYSYAEKQLKAPDSHVNAQTNWSMEYSRLKAKIELWERNQRHYLGEDLESISIKELQNLEQQLDTSLKHIRSRKVCK.

In terms of domain architecture, MADS-box spans 1-61; sequence MGRGRVEMKR…GKLFEYSSES (61 aa). In terms of domain architecture, K-box; partial spans 90–148; the sequence is QTNWSMEYSRLKAKIELWERNQRHYLGEDLESISIKELQNLEQQLDTSLKHIRSRKVCK.

As to quaternary structure, homodimer capable of binding to CArG-box sequences.

The protein resides in the nucleus. Functionally, probable transcription factor that promotes early floral meristem identity in synergy with APETALA1, FRUITFULL and LEAFY. Is required subsequently for the transition of an inflorescence meristem into a floral meristem. Seems to be partially redundant to the function of APETALA1. The protein is Truncated transcription factor CAULIFLOWER D (CAL-D) of Brassica oleracea var. botrytis (Cauliflower).